A 1651-amino-acid chain; its full sequence is Alsin (1651 aa).

RCC1 repeat units follow at residues 59–108 (DGEV…AVTE), 109–167 (SGVV…ALSL), and 169–218 (REIW…ALVQ). The segment at 425–462 (ETAAQSGSASTGPESLKDLREEQVKQESLQGKKSSSLM) is disordered. Over residues 427–437 (AAQSGSASTGP) the composition is skewed to polar residues. The segment covering 439–449 (SLKDLREEQVK) has biased composition (basic and acidic residues). Residues 450-461 (QESLQGKKSSSL) show a composition bias toward polar residues. Ser459, Ser460, Ser477, and Ser486 each carry phosphoserine. Thr504 is modified (phosphothreonine). 2 RCC1 repeats span residues 519–570 (RTEV…ALTA) and 572–621 (SQVY…FLVD). Lys527 carries the post-translational modification N6-acetyllysine. A DH domain is found at 684 to 879 (GYIASLHELA…ESLALHLGKK (196 aa)). Residues 895–1001 (GKMTDSLRKP…RAISQAVDQA (107 aa)) enclose the PH domain. 8 MORN repeats span residues 1043–1065 (YDGR…DGKM), 1066–1088 (YSGM…NKAL), 1094–1116 (YVGH…SGEV), 1117–1139 (FEGC…KLTS), 1145–1167 (FIGQ…TRGE), 1169–1191 (YMGM…FGLY), 1192–1214 (YEGN…DDTI), and 1215–1238 (YEGE…HGDY). Ser1329 is subject to Phosphoserine. Residues 1507–1651 (KQPDIALLGF…YFQIQREKLN (145 aa)) enclose the VPS9 domain.

In terms of assembly, forms a heteromeric complex with ALS2CL. Interacts with ALS2CL.

Functionally, may act as a GTPase regulator. Controls survival and growth of spinal motoneurons. The polypeptide is Alsin (Als2) (Mus musculus (Mouse)).